The primary structure comprises 615 residues: Lipoprotein LpqB (615 aa).

Positions 1–29 (MGADRGRGGRRRPARVVAYAVGGVVLLAG) are cleaved as a signal peptide. C30 carries N-palmitoyl cysteine lipidation. A lipid anchor (S-diacylglycerol cysteine) is attached at C30. Residues 100-123 (PDESATVLAGGPGTESDHSGNRED) form a disordered region. The segment covering 114–123 (ESDHSGNRED) has biased composition (basic and acidic residues).

Belongs to the LpqB lipoprotein family.

The protein resides in the cell membrane. The chain is Lipoprotein LpqB from Streptomyces coelicolor (strain ATCC BAA-471 / A3(2) / M145).